A 353-amino-acid chain; its full sequence is ATP-dependent kinase YFH7 (353 aa).

Residue 31–39 (GSPGSGKST) coordinates ATP.

The protein belongs to the YFH7 family.

ATP-dependent kinase that could be involved in endoplasmic reticulum membrane assembly. The polypeptide is ATP-dependent kinase YFH7 (YFH7) (Saccharomyces cerevisiae (strain RM11-1a) (Baker's yeast)).